The primary structure comprises 66 residues: ATP synthase subunit c (66 aa).

Transmembrane regions (helical) follow at residues 3–23 (LTFF…GMLM) and 45–65 (IMGI…SFVI).

It belongs to the ATPase C chain family. In terms of assembly, F-type ATPases have 2 components, F(1) - the catalytic core - and F(0) - the membrane proton channel. F(1) has five subunits: alpha(3), beta(3), gamma(1), delta(1), epsilon(1). F(0) has three main subunits: a(1), b(2) and c(10-14). The alpha and beta chains form an alternating ring which encloses part of the gamma chain. F(1) is attached to F(0) by a central stalk formed by the gamma and epsilon chains, while a peripheral stalk is formed by the delta and b chains.

Its subcellular location is the cell membrane. Its function is as follows. F(1)F(0) ATP synthase produces ATP from ADP in the presence of a proton or sodium gradient. F-type ATPases consist of two structural domains, F(1) containing the extramembraneous catalytic core and F(0) containing the membrane proton channel, linked together by a central stalk and a peripheral stalk. During catalysis, ATP synthesis in the catalytic domain of F(1) is coupled via a rotary mechanism of the central stalk subunits to proton translocation. Functionally, key component of the F(0) channel; it plays a direct role in translocation across the membrane. A homomeric c-ring of between 10-14 subunits forms the central stalk rotor element with the F(1) delta and epsilon subunits. This Streptococcus oralis protein is ATP synthase subunit c (atpE).